The primary structure comprises 598 residues: NADPH-dependent diflavin oxidoreductase 1 (598 aa).

In terms of domain architecture, Flavodoxin-like spans 6–150 (LLVLFGSQTG…AIDPWVGDLW (145 aa)). FMN contacts are provided by residues 12–17 (SQTGTA), 59–62 (ATTG), 97–106 (LGDSSYAKFN), and Asp-132. Residues 206-448 (LQPFLAPVIT…VRPGSLVFPK (243 aa)) form the FAD-binding FR-type domain. FAD is bound by residues Arg-350, 382–385 (RAFS), and 416–419 (GLCS). NADP(+) is bound by residues Thr-461, 516–517 (SR), 522–526 (KVYVQ), and Asp-559. Position 597 (Trp-597) interacts with FAD.

This sequence belongs to the NADPH-dependent diflavin oxidoreductase NDOR1 family. The protein in the N-terminal section; belongs to the flavodoxin family. It in the C-terminal section; belongs to the flavoprotein pyridine nucleotide cytochrome reductase family. Interacts with CIAPIN1; as part of the cytosolic iron-sulfur (Fe-S) protein assembly (CIA) machinery. Interacts with DCPS. FAD is required as a cofactor. The cofactor is FMN.

The protein localises to the cytoplasm. It localises to the perinuclear region. The enzyme catalyses 2 oxidized [2Fe-2S]-[protein] + NADPH = 2 reduced [2Fe-2S]-[protein] + NADP(+) + H(+). In terms of biological role, NADPH-dependent reductase which is a central component of the cytosolic iron-sulfur (Fe-S) protein assembly (CIA) machinery. Transfers electrons from NADPH via its FAD and FMN prosthetic groups to the [2Fe-2S] cluster of CIAPIN1, another key component of the CIA machinery. In turn, this reduced cluster provides electrons for assembly of cytosolic iron-sulfur cluster proteins. It can also reduce the [2Fe-2S] cluster of CISD1 and activate this protein implicated in Fe/S cluster repair. In vitro can fully activate methionine synthase/MTR in the presence of soluble cytochrome b5/CYB5A. The sequence is that of NADPH-dependent diflavin oxidoreductase 1 from Mus musculus (Mouse).